Reading from the N-terminus, the 492-residue chain is KAT8 regulatory NSL complex subunit 2 (492 aa).

K78 is covalently cross-linked (Glycyl lysine isopeptide (Lys-Gly) (interchain with G-Cter in SUMO2)). Residues 127–182 (LGSQTPESSRSEASRILDEDSWSDGEQEPITVDQTWRGDPDSEADSIDSDQEDPLK) are disordered. Phosphothreonine is present on T131. Basic and acidic residues predominate over residues 135–144 (SRSEASRILD). Phosphoserine occurs at positions 147, 149, 168, 172, and 175. Residues 167–178 (DSEADSIDSDQE) show a composition bias toward acidic residues. The interval 308–364 (DVRCSNQSLPMTRHCLTHICQDTNQVLFKCCQGSEEVPCNKPVPVSLSEDPCCPLHF) is required for interaction with other NSL complex members. Residues 455–492 (AGDGCRSQGSRNSEKGSAPLSQSGLATANGKPEPTSIS) form a disordered region.

In terms of assembly, component of the NSL complex at least composed of KAT8/MOF, KANSL1, KANSL2, KANSL3, MCRS1, PHF20, OGT1/OGT, WDR5 and HCFC1.

The protein resides in the nucleus. Its subcellular location is the mitochondrion. Non-catalytic component of the NSL histone acetyltransferase complex, a multiprotein complex that mediates histone H4 acetylation at 'Lys-5'- and 'Lys-8' (H4K5ac and H4K8ac) at transcription start sites and promotes transcription initiation. Required for NSL complex stability and for transcription of intraciliary transport genes in both ciliated and non-ciliated cells by regulating histone H4 acetylation at 'Lys-5'- and 'Lys-12' (H4K5ac and H4K12ac). This is necessary for cilium assembly in ciliated cells and for organization of the microtubule cytoskeleton in non-ciliated cells. Required within the NSL complex to maintain nuclear architecture stability by promoting KAT8-mediated acetylation of lamin LMNA. The sequence is that of KAT8 regulatory NSL complex subunit 2 (KANSL2) from Pongo abelii (Sumatran orangutan).